The chain runs to 158 residues: C-type lectin BfL-1 (158 aa).

An N-terminal signal peptide occupies residues 1-21 (MGHFTFIGLCLLAMFLSLSGA). 4 cysteine pairs are disulfide-bonded: Cys-26-Cys-37, Cys-54-Cys-154, Cys-61-Cys-156, and Cys-129-Cys-146. The C-type lectin domain maps to 33–155 (KNGLCYKVFS…CAALRPFLCQ (123 aa)). Ca(2+) is bound by residues Gln-119, Asp-121, and Glu-127. The short motif at 119 to 121 (QPD) is the Galactose-binding element. N-linked (GlcNAc...) asparagine glycosylation occurs at Asn-134. Ca(2+) contacts are provided by Asn-142 and Asp-143.

This sequence belongs to the true venom lectin family. As to quaternary structure, homodimer; non-covalently linked. As to expression, expressed by the venom gland.

It localises to the secreted. Galactose-binding lectin which recognizes specific carbohydrate structures and agglutinates a variety of animal cells by binding to cell-surface glycoproteins and glycolipids. May be a calcium-dependent lectin. The polypeptide is C-type lectin BfL-1 (Bungarus fasciatus (Banded krait)).